Reading from the N-terminus, the 164-residue chain is RNA pyrophosphohydrolase (164 aa).

The Nudix hydrolase domain occupies 12-158 (RYRQCAGVML…KREVYRAVVK (147 aa)). The Nudix box signature appears at 47-68 (GGIDPGETQQEAAMRELEEETG).

It belongs to the Nudix hydrolase family. RppH subfamily. It depends on a divalent metal cation as a cofactor.

In terms of biological role, accelerates the degradation of transcripts by removing pyrophosphate from the 5'-end of triphosphorylated RNA, leading to a more labile monophosphorylated state that can stimulate subsequent ribonuclease cleavage. The polypeptide is RNA pyrophosphohydrolase (Erythrobacter litoralis (strain HTCC2594)).